A 540-amino-acid polypeptide reads, in one-letter code: Beta-glucosidase 1B (540 aa).

Residues Gln-25, His-128, and Asn-174 each coordinate substrate. The Proton donor role is filled by Glu-175. Tyr-316 lines the substrate pocket. The active-site Nucleophile is Glu-380. Residues Trp-430 and 437–438 (EW) contribute to the substrate site. Residues 481 to 492 (PAAETKKAATPS) are compositionally biased toward low complexity. Residues 481-524 (PAAETKKAATPSPLKPHGAISNGVSKKSSATKEPKSASRKKGRK) are disordered.

It belongs to the glycosyl hydrolase 1 family.

The enzyme catalyses Hydrolysis of terminal, non-reducing beta-D-glucosyl residues with release of beta-D-glucose.. Its function is as follows. Plays an important role in cellulose degradation. Shows hydrolytic activity against several glycosidic compounds. The polypeptide is Beta-glucosidase 1B (Phanerodontia chrysosporium (White-rot fungus)).